Consider the following 108-residue polypeptide: Protein YcgL (108 aa).

One can recognise a YcgL domain in the interval 12–96 (MFCVIYRSSK…PPEDLLKQHL (85 aa)).

This chain is Protein YcgL, found in Escherichia coli O127:H6 (strain E2348/69 / EPEC).